Consider the following 258-residue polypeptide: Type III pantothenate kinase (258 aa).

Residue 6–13 (DVGNTNTV) participates in ATP binding. Substrate-binding positions include Y100 and 107–110 (GADR). The Proton acceptor role is filled by D109. Residue D129 coordinates K(+). T132 provides a ligand contact to ATP. T184 is a binding site for substrate.

It belongs to the type III pantothenate kinase family. As to quaternary structure, homodimer. Requires NH4(+) as cofactor. It depends on K(+) as a cofactor.

The protein resides in the cytoplasm. It carries out the reaction (R)-pantothenate + ATP = (R)-4'-phosphopantothenate + ADP + H(+). It participates in cofactor biosynthesis; coenzyme A biosynthesis; CoA from (R)-pantothenate: step 1/5. In terms of biological role, catalyzes the phosphorylation of pantothenate (Pan), the first step in CoA biosynthesis. This chain is Type III pantothenate kinase, found in Geobacillus sp. (strain WCH70).